We begin with the raw amino-acid sequence, 101 residues long: Protein mes1 (101 aa).

The span at 1-19 (MVNTDNKENEPPNMEKAHM) shows a compositional bias: basic and acidic residues. The tract at residues 1-101 (MVNTDNKENE…RSPNPLLSMR (101 aa)) is disordered.

As to quaternary structure, interacts with slp1.

The protein localises to the cytoplasm. The protein resides in the nucleus. In terms of biological role, specifically required for meiosis II (MII). Binds to slp1, an activator of the anapahase promoting complex/cyclcosome (APC/C), and counteracts its function in promoting proteolysis of cdc13. By suppressing the degradation of cdc13 at anaphase I this protein may help maintain a sufficient level of cdc2 kinase activity to complete MII. The chain is Protein mes1 (mes1) from Schizosaccharomyces pombe (strain 972 / ATCC 24843) (Fission yeast).